A 413-amino-acid chain; its full sequence is Tyrosine--tRNA ligase (413 aa).

An L-tyrosine-binding site is contributed by Tyr34. The 'HIGH' region motif lies at 39–48 (PTSHSLTVGH). L-tyrosine-binding residues include Tyr164 and Gln168. The 'KMSKS' region motif lies at 225-229 (KFGKS). Lys228 is a binding site for ATP. The S4 RNA-binding domain maps to 347 to 413 (ILLVDALVQT…GKKNNALIVF (67 aa)).

It belongs to the class-I aminoacyl-tRNA synthetase family. TyrS type 1 subfamily. Homodimer.

The protein localises to the cytoplasm. It carries out the reaction tRNA(Tyr) + L-tyrosine + ATP = L-tyrosyl-tRNA(Tyr) + AMP + diphosphate + H(+). Catalyzes the attachment of tyrosine to tRNA(Tyr) in a two-step reaction: tyrosine is first activated by ATP to form Tyr-AMP and then transferred to the acceptor end of tRNA(Tyr). The chain is Tyrosine--tRNA ligase from Aster yellows witches'-broom phytoplasma (strain AYWB).